The following is a 213-amino-acid chain: Skin granule protein (213 aa).

Positions 1–26 (METMYHRFLCIPFLLILGLAQGQSKG) are cleaved as a signal peptide. A run of 3 repeats spans residues 27 to 48 (LQTV…IRTG), 49 to 70 (LQPI…IRTG), and 71 to 92 (LQPI…IRTG). The tract at residues 27–104 (LQTVTTFRTG…PIATFQTGVQ (78 aa)) is 4 X 22 AA approximate tandem repeats. One copy of the 4; truncated repeat lies at 93–104 (LQPIATFQTGVQ). A disordered region spans residues 162-213 (WHGGRNGHKMKKLGKKKHHKNRHGGKNHHKMKKIGKHHGGGRKFGKKHRHHK). Positions 166 to 213 (RNGHKMKKLGKKKHHKNRHGGKNHHKMKKIGKHHGGGRKFGKKHRHHK) are enriched in basic residues.

The protein localises to the secreted. This chain is Skin granule protein (sgp), found in Xenopus laevis (African clawed frog).